The chain runs to 59 residues: Large ribosomal subunit protein uL30 (59 aa).

The protein belongs to the universal ribosomal protein uL30 family. In terms of assembly, part of the 50S ribosomal subunit.

The polypeptide is Large ribosomal subunit protein uL30 (Geotalea uraniireducens (strain Rf4) (Geobacter uraniireducens)).